The chain runs to 150 residues: UPF0756 membrane protein Dd1591_2981 (150 aa).

A run of 4 helical transmembrane segments spans residues 10–32 (ILLA…AILF), 51–71 (YGLS…IASG), 88–108 (LMAV…VVLM), and 127–147 (ALFR…SLLI).

This sequence belongs to the UPF0756 family.

It localises to the cell membrane. This Dickeya chrysanthemi (strain Ech1591) (Dickeya zeae (strain Ech1591)) protein is UPF0756 membrane protein Dd1591_2981.